Reading from the N-terminus, the 759-residue chain is Solute carrier family 26 member 6 (759 aa).

Residues 1 to 115 are Cytoplasmic-facing; it reads MGLADASGPR…PQGLAYALLA (115 aa). A helical transmembrane segment spans residues 116 to 136; sequence GLPPVFGLYSSFYPVFIYFLF. Residues 137 to 186 lie on the Extracellular side of the membrane; sequence GTSRHISVGTFAVMSVMVGSVTESLAPQALNDSMINETARDAARVQVAST. 2 N-linked (GlcNAc) asparagine glycosylation sites follow: asparagine 167 and asparagine 172. The chain crosses the membrane as a helical span at residues 187-207; the sequence is LSVLVGLFQVGLGLIHFGFVV. Residues 208–263 lie on the Cytoplasmic side of the membrane; that stretch reads TYLSEPLVRGYTTAAAVQVFVSQLKYVFGLHLSSHSGPLSLIYTVLEVCWKLPQSK. A helical membrane pass occupies residues 264–284; that stretch reads VGTVVTAAVAGVVLVVVKLLN. Topologically, residues 285-293 are extracellular; that stretch reads DKLQQQLPM. Residues 294 to 314 form a helical membrane-spanning segment; that stretch reads PIPGELLTLIGATGISYGMGL. The Cytoplasmic segment spans residues 315-347; it reads KHRFEVDVVGNIPAGLVPPVAPNTQLFSKLVGS. A helical membrane pass occupies residues 348–368; that stretch reads AFTIAVVGFAIAISLGKIFAL. Residues 369 to 379 are Extracellular-facing; the sequence is RHGYRVDSNQE. Residues 380 to 400 form a helical membrane-spanning segment; it reads LVALGLSNLIGGIFQCFPVSC. Residues 401 to 416 lie on the Cytoplasmic side of the membrane; the sequence is SMSRSLVQESTGGNSQ. Residues 417 to 437 form a helical membrane-spanning segment; it reads VAGAISSLFILLIIVKLGELF. The Extracellular segment spans residues 438 to 484; it reads HDLPKAVLAAIIIVNLKGMLRQLSDMRSLWKANRADLLIWLVTFTAT. Residues 485-505 form a helical membrane-spanning segment; the sequence is ILLNLDLGLVVAVIFSLLLVV. The Cytoplasmic segment spans residues 506–759; sequence VRTQMPHYSV…PDSPVSVTRL (254 aa). Residues 530–742 enclose the STAS domain; the sequence is EYSEAKEVRG…ASVHDAVTFA (213 aa). Phosphoserine; by PKC occurs at positions 553 and 582. At serine 616 the chain carries Phosphoserine. The interval 636–657 is disordered; it reads GDKMEDATANGQEDSKAPDGST. Serine 752 and serine 755 each carry phosphoserine.

Belongs to the SLC26A/SulP transporter (TC 2.A.53) family. As to quaternary structure, interacts (via C-terminal domain) with PDZK1 (via C-terminal PDZ domain); the interaction induces chloride and oxalate exchange transport. Interacts with CFTR and SLC26A3. Interacts with AHCYL1; the interaction increases SLC26A6 activity. In terms of assembly, interacts with NHERF1 (via the PDZ domains) and NHERF2 (via the PDZ domains). Interacts (via C-terminal cytoplasmic domain) with CA2; the interaction stimulates chloride-bicarbonate exchange activity. Interacts with NHERF1 (via the PDZ domains) and NHERF2 (via the PDZ domains). Post-translationally, phosphorylated on serine residues by PKC; the phosphorylation disrupts interaction with carbonic anhydrase CA2 and reduces bicarbonate transport activity in a phorbol myristate acetate (PMA)-induced manner. In terms of processing, glycosylation at Asn-167 and Asn-172 positively regulates its chloride oxalate exchanger activity. In terms of tissue distribution, ubiquitous. Highest levels in kidney and pancreas. Lower expression in heart, skeletal muscle, liver and placenta. Also found in lung and brain. Ubiquitously expressed. Highest levels expressed in the kidney and pancreas. As to expression, expressed weakly in placenta, lung, liver and pancreas. In terms of tissue distribution, expressed in heart, brain, placenta, lung, liver, kidney, pancreas, spleen, thymus, prostate, testis and ovary.

The protein resides in the cell membrane. The protein localises to the apical cell membrane. It localises to the cytoplasmic vesicle membrane. It is found in the microsome. Its subcellular location is the basolateral cell membrane. It carries out the reaction 2 hydrogencarbonate(in) + chloride(out) = 2 hydrogencarbonate(out) + chloride(in). The enzyme catalyses oxalate(in) + chloride(out) = oxalate(out) + chloride(in). The catalysed reaction is oxalate(in) + formate(out) = oxalate(out) + formate(in). It catalyses the reaction oxalate(in) + sulfate(out) = oxalate(out) + sulfate(in). It carries out the reaction 2 hydrogencarbonate(out) + sulfate(in) = 2 hydrogencarbonate(in) + sulfate(out). Oxalate transport activity is inhibited by 4,4'-diisothiocyanatostilbene-2,2'-disulfonic acid (DIDS). Its activity is regulated as follows. Chloride, bicarbonate and sulfate transport activities are inhibited by 4,4'-diisothiocyanatostilbene-2,2'-disulfonic acid (DIDS). Apical membrane anion-exchanger with wide epithelial distribution that plays a role as a component of the pH buffering system for maintaining acid-base homeostasis. Acts as a versatile DIDS-sensitive inorganic and organic anion transporter that mediates the uptake of monovalent anions like chloride, bicarbonate, formate and hydroxyl ion and divalent anions like sulfate and oxalate. Functions in multiple exchange modes involving pairs of these anions, which include chloride-bicarbonate, chloride-oxalate, oxalate-formate, oxalate-sulfate and chloride-formate exchange. Apical membrane chloride-bicarbonate exchanger that mediates luminal chloride absorption and bicarbonate secretion by the small intestinal brush border membrane and contributes to intracellular pH regulation in the duodenal upper villous epithelium during proton-coupled peptide absorption, possibly by providing a bicarbonate import pathway. Also mediates intestinal chloride absorption and oxalate secretion, thereby preventing hyperoxaluria and calcium oxalate urolithiasis. Transepithelial oxalate secretion, chloride-formate, chloride-oxalate and chloride-bicarbonate transport activities in the duodenum are inhibited by PKC activation in a calcium-independent manner. The apical membrane chloride-bicarbonate exchanger also provides a major route for fluid and bicarbonate secretion into the proximal tubules of the kidney as well as into the proximal part of the interlobular pancreatic ductal tree, where it mediates electrogenic chloride-bicarbonate exchange with a chloride-bicarbonate stoichiometry of 1:2, and hence will dilute and alkalinize protein-rich acinar secretion. Also mediates the transcellular sulfate absorption and oxalate secretion across the apical membrane in the duodenum and the formate ion efflux at the apical brush border of cells in the proximal tubules of kidney. Plays a role in sperm capacitation by increasing intracellular pH. Functionally, apical membrane chloride-bicarbonate exchanger. Its association with carbonic anhydrase CA2 forms a bicarbonate transport metabolon; hence maximizes the local concentration of bicarbonate at the transporter site. This chain is Solute carrier family 26 member 6 (SLC26A6), found in Homo sapiens (Human).